Reading from the N-terminus, the 370-residue chain is Tomoregulin-1 (370 aa).

An N-terminal signal peptide occupies residues 1–36 (MDGLHPASWMLLLGSLAFWSASSLLLFSLALPGARA). Topologically, residues 37–320 (SNQLLSECHN…VPSRQKLTHV (284 aa)) are extracellular. N-linked (GlcNAc...) asparagine glycosylation occurs at asparagine 53. Kazal-like domains follow at residues 88 to 135 (ICQF…PCFS) and 179 to 227 (VCNI…SCIE). 9 disulfides stabilise this stretch: cysteine 89-cysteine 119, cysteine 93-cysteine 112, cysteine 101-cysteine 133, cysteine 180-cysteine 211, cysteine 184-cysteine 204, cysteine 193-cysteine 225, cysteine 265-cysteine 278, cysteine 273-cysteine 289, and cysteine 291-cysteine 300. Residues 261–301 (NYIPCSENYNGYCVHGKCELSYSSQKASCRCDSGYTGQYCD) form the EGF-like domain. Residues 321–341 (LIAAIIGAVQIAIIVAIVMCI) traverse the membrane as a helical segment. At 342–370 (TRKCPKNNRGRRQKQNLGHFSSDTSSRMV) the chain is on the cytoplasmic side. A disordered region spans residues 349 to 370 (NRGRRQKQNLGHFSSDTSSRMV). The segment covering 356–370 (QNLGHFSSDTSSRMV) has biased composition (polar residues).

The protein belongs to the tomoregulin family. In terms of assembly, interacts with cripto. Expressed at highest levels in brain, and at lower levels in neuroendocrine tissues. Present in neurons from the diencephalon (at protein level).

It localises to the cell membrane. In terms of biological role, inhibits nodal/nr-1 and bmp signaling during neural patterning through interaction with cripto. The polypeptide is Tomoregulin-1 (tmeff1) (Xenopus laevis (African clawed frog)).